The chain runs to 219 residues: Lipid transferase CIDEB (219 aa).

One can recognise a CIDE-N domain in the interval 34 to 110 (PQRPFRVCDH…VLQSGQSWSP (77 aa)).

It belongs to the CIDE family. As to quaternary structure, interacts with DFFA. Interacts with DFFB; inhibited by DFFB. Interacts with APOB. Interacts with PREB/SEC12; facilitating loading of SCAP-SREBP into COPII vesicles. In terms of assembly, (Microbial infection) Interacts (via N-terminus) with HCV non-structural protein 5A (via N-terminus); this interaction seems to regulate the association of HCV particles with ApoE. In terms of tissue distribution, highly expressed in liver and small intestine and, at lower levels, in colon, kidney and spleen.

It is found in the lipid droplet. The protein resides in the endoplasmic reticulum membrane. The protein localises to the golgi apparatus. It localises to the cytoplasmic vesicle. Its subcellular location is the COPI-coated vesicle. Its function is as follows. Lipid transferase specifically expressed in hepatocytes, which promotes unilocular lipid droplet formation by mediating lipid droplet fusion. Lipid droplet fusion promotes their enlargement, restricting lipolysis and favoring lipid storage. Localizes on the lipid droplet surface, at focal contact sites between lipid droplets, and mediates atypical lipid droplet fusion by promoting directional net neutral lipid transfer from the smaller to larger lipid droplets. The transfer direction may be driven by the internal pressure difference between the contacting lipid droplet pair. Promotes lipid exchange and lipid droplet fusion in both small and large lipid droplet-containing hepatocytes. In addition to its role in lipid droplet fusion, also involved in cytoplasmic vesicle biogenesis and transport. Required for very-low-density lipoprotein (VLDL) lipidation and maturation. Probably involved in the biogenesis of VLDL transport vesicles by forming a COPII vesicle coat and facilitating the formation of endoplasmic reticulum-derived large vesicles. Also involved in sterol-regulated export of the SCAP-SREBP complex, composed of SCAP, SREBF1/SREBP1 and SREBF2/SREBP2, by promoting loading of SCAP-SREBP into COPII vesicles. May also activate apoptosis. (Microbial infection) Involved in Hepatatis C virus (HCV) assembly and required for HCV entry into hepatocytes. This is Lipid transferase CIDEB from Homo sapiens (Human).